The following is a 471-amino-acid chain: Alpha-galactosidase (471 aa).

The signal sequence occupies residues 1–18 (MFNLNFFNYTCHCEWCFW). An intrachain disulfide couples cysteine 42 to cysteine 74. Asparagine 43 carries N-linked (GlcNAc...) asparagine glycosylation. Positions 72 and 73 each coordinate substrate. An N-linked (GlcNAc...) asparagine glycan is attached at asparagine 105. Cysteine 121 and cysteine 151 are oxidised to a cystine. Lysine 147 is a substrate binding site. Aspartate 149 (nucleophile) is an active-site residue. N-linked (GlcNAc...) asparagine glycosylation occurs at asparagine 175. Arginine 205 contributes to the substrate binding site. Residue aspartate 209 is the Proton donor of the active site. 2 disulfides stabilise this stretch: cysteine 221/cysteine 237 and cysteine 223/cysteine 230. A substrate-binding site is contributed by glutamine 251. Asparagine 270, asparagine 370, asparagine 403, asparagine 417, asparagine 422, and asparagine 454 each carry an N-linked (GlcNAc...) asparagine glycan.

This sequence belongs to the glycosyl hydrolase 27 family. As to quaternary structure, homotetramer.

It is found in the secreted. The catalysed reaction is Hydrolysis of terminal, non-reducing alpha-D-galactose residues in alpha-D-galactosides, including galactose oligosaccharides, galactomannans and galactolipids.. In Saccharomyces paradoxus (Yeast), this protein is Alpha-galactosidase (MEL).